Here is a 65-residue protein sequence, read N- to C-terminus: uncharacterized protein (65 aa).

This is an uncharacterized protein from Saccharolobus islandicus (Sulfolobus islandicus).